The following is a 76-amino-acid chain: Defensin-like protein 155 (76 aa).

Residues 1-27 (MAKISCSYLLILMLALSVFSVVEKAKG) form the signal peptide. Cystine bridges form between cysteine 31–cysteine 76, cysteine 40–cysteine 59, cysteine 45–cysteine 70, and cysteine 49–cysteine 72.

Belongs to the DEFL family.

It localises to the secreted. The polypeptide is Defensin-like protein 155 (LCR36) (Arabidopsis thaliana (Mouse-ear cress)).